Reading from the N-terminus, the 657-residue chain is MGNFKIHSKFKPTGDQPKAIETILKSIKKGNEFQTLLGVTGSGKTFTMANIIEKLQRPTLILAHNKTLAAQLCSEFKEFFPENIVEYFVSYYDYYQPEAYVPQTDTFIEKDASINDEIDKLRHSATSALFERRDVIIVASVSCIYGLGNPDEYKKLTISLRKGMQKERDEIIKKLIEIQYERNDIDFSRGTFRVRGDLLDIIPSSTSSKGIRIEFFGDEIDRIREFDVLTGTILGERNHVLIFPASHFATSKETVERSLGEIENELENRLRELNSQEKLLEAQRLRQRTNFDIEMIREMGYCSGIENYSRILDGRAPGTPPKTLIDYFPEDFLLFIDESHVTLPQVRAMYAGDRSRKNTLVDYGFRLPCAYDNRPLKFEEFEKKINQVMFVSATPAQYELEHSQSIAEQVIRPTGLLDPEIIIKPVKGQIDDLYTEIQETISRGYRILITTLTKRMAEDLTKYMIELGVKATYMHSDIDTIERMKIIRDLRLGEYDVLVGINLLREGLDIPEVALVAILDADKEGFLRSETSLIQTIGRAARNSESKVIMYADNITKSMKKAISETERRRKIQTEYNEEHGIIPQTINKEVRDLIEATKVAEESTEYGIEATKSLTKKEVKKLIKEYTEEMMLAAKNLQFERAAQLRDEIEELKGKE.

The region spanning 25-182 is the Helicase ATP-binding domain; the sequence is KSIKKGNEFQ…KKLIEIQYER (158 aa). 38–45 is a binding site for ATP; it reads GVTGSGKT. Positions 91–114 match the Beta-hairpin motif; that stretch reads YYDYYQPEAYVPQTDTFIEKDASI. A Helicase C-terminal domain is found at 429 to 595; it reads QIDDLYTEIQ…TINKEVRDLI (167 aa). The 36-residue stretch at 621 to 656 folds into the UVR domain; it reads KKLIKEYTEEMMLAAKNLQFERAAQLRDEIEELKGK.

This sequence belongs to the UvrB family. In terms of assembly, forms a heterotetramer with UvrA during the search for lesions. Interacts with UvrC in an incision complex.

The protein localises to the cytoplasm. The UvrABC repair system catalyzes the recognition and processing of DNA lesions. A damage recognition complex composed of 2 UvrA and 2 UvrB subunits scans DNA for abnormalities. Upon binding of the UvrA(2)B(2) complex to a putative damaged site, the DNA wraps around one UvrB monomer. DNA wrap is dependent on ATP binding by UvrB and probably causes local melting of the DNA helix, facilitating insertion of UvrB beta-hairpin between the DNA strands. Then UvrB probes one DNA strand for the presence of a lesion. If a lesion is found the UvrA subunits dissociate and the UvrB-DNA preincision complex is formed. This complex is subsequently bound by UvrC and the second UvrB is released. If no lesion is found, the DNA wraps around the other UvrB subunit that will check the other stand for damage. In Clostridium botulinum (strain Alaska E43 / Type E3), this protein is UvrABC system protein B.